The primary structure comprises 90 residues: N(2)-fixation sustaining protein CowN (90 aa).

The protein belongs to the CowN family.

Its function is as follows. Is required to sustain N(2)-dependent growth in the presence of low levels of carbon monoxide (CO). Probably acts by protecting the N(2) fixation ability of the nitrogenase complex, which is inactivated in the presence of CO. In Halorhodospira halophila (strain DSM 244 / SL1) (Ectothiorhodospira halophila (strain DSM 244 / SL1)), this protein is N(2)-fixation sustaining protein CowN.